We begin with the raw amino-acid sequence, 404 residues long: MLRAIAEERGRLSLRREVCGLGCFKDDRIVFWTWMFSTYFMEKWAPRQDDMLFYVRRKLAYSGSESGADGRKAAEPEVEVEVYRRDSKKLPGLGDPDIDWEESVCLNLILQKLDYMVTCAVCTRADGGDIHIHKKKSQQVFASPSKHPMDSKGEESKISYPNIFFMIDSFEEVFSDMTVGEGEMVCVELVASDKTNTFQGVIFQGSIRYEALKKVYDNRVSVAARMAQKMSFGFYKYSNMEFVRMKGPQGKGHAEMAVSRVSTGDTSPCGTEEDSSPASPMHERVTSFSTPPTPERNNRPAFFSPSLKRKVPRNRIAEMKKSHSANDSEEFFREDDGGADLHNATNLRSRSLSGTGRSLVGSWLKLNRADGNFLLYAHLTYVTLPLHRILTDILEVRQKPILMT.

Disordered stretches follow at residues 261–307 (VSTG…SPSL) and 320–340 (KKSH…GGAD). A phosphoserine mark is found at Ser-267, Ser-276, and Ser-279. Residues Thr-290 and Thr-293 each carry the phosphothreonine modification. Ser-304, Ser-306, Ser-324, Ser-358, and Ser-362 each carry phosphoserine. The segment covering 320–336 (KKSHSANDSEEFFREDD) has biased composition (basic and acidic residues).

This is an uncharacterized protein from Homo sapiens (Human).